Consider the following 154-residue polypeptide: Large ribosomal subunit protein uL13 (154 aa).

Positions 131 to 154 are disordered; it reads DHKHEAQQPEVVDFKSMNSKNTRG.

It belongs to the universal ribosomal protein uL13 family. As to quaternary structure, part of the 50S ribosomal subunit.

Functionally, this protein is one of the early assembly proteins of the 50S ribosomal subunit, although it is not seen to bind rRNA by itself. It is important during the early stages of 50S assembly. In Maricaulis maris (strain MCS10) (Caulobacter maris), this protein is Large ribosomal subunit protein uL13.